A 49-amino-acid chain; its full sequence is Disintegrin echistatin-gamma (49 aa).

A Disintegrin domain is found at 1 to 47 (DCASGPCCRDCKFLEEGTICNMARGDDMDDYCNGKTCDCPRNPHKWP). Intrachain disulfides connect Cys-2–Cys-11, Cys-7–Cys-32, Cys-8–Cys-37, and Cys-20–Cys-39. A Cell attachment site motif is present at residues 24–26 (RGD).

This sequence belongs to the venom metalloproteinase (M12B) family. P-II subfamily. P-IIa sub-subfamily. Monomer. In terms of tissue distribution, expressed by the venom gland.

It localises to the secreted. Has antiplatelet activities on guinea pig, followed by human, rabbit and rat platelet-rich plasma. The sequence is that of Disintegrin echistatin-gamma from Echis pyramidum leakeyi (Leakey's carpet viper).